The following is a 336-amino-acid chain: Probable magnesium transporter NIPA2 (336 aa).

The Extracellular portion of the chain corresponds to 1 to 7 (MEEMSPD). Residues 8–28 (NIHGVILAVSSSIFIGSSFII) form a helical membrane-spanning segment. Topologically, residues 29 to 55 (KKKGLKKAGVSGARAGEGGYGYLYEPW) are cytoplasmic. The chain crosses the membrane as a helical span at residues 56 to 76 (WWAGMITMIVGEIANFAAYAF). Residues 77–79 (APA) are Extracellular-facing. Residues 80 to 100 (ILVTPLGALSIIFSAVLAHFI) form a helical membrane-spanning segment. The Cytoplasmic segment spans residues 101–104 (LEEK). A helical membrane pass occupies residues 105–125 (LHMFGILGCVLCVVGSTTIVL). At 126 to 145 (HAPHEQGIESVKQVWHLATE) the chain is on the extracellular side. Residues 146 to 166 (PGFLAYSAVVLVVVLALIFYY) traverse the membrane as a helical segment. At 167-179 (EPRYGKTHMIVYV) the chain is on the cytoplasmic side. Residues 180 to 200 (GICSLMGSLTVMSVKAVAIAI) traverse the membrane as a helical segment. Residues 201–212 (KLTFSGMNQFKY) are Extracellular-facing. A helical transmembrane segment spans residues 213–233 (FHAWIFIIVVTICCILQINYL). Residues 234–244 (NKALDNFNTAV) are Cytoplasmic-facing. A helical transmembrane segment spans residues 245–265 (ISPVYYVMFTTFTILASMIMF). The Extracellular portion of the chain corresponds to 266–272 (KDWASQS). Residues 273–293 (GLQIATELCGFVTILSGTFLL) form a helical membrane-spanning segment. Residues 294–336 (HKTKDMGNSTSLRGSTSHSPRDTPVFINSGSSRSSNSTRPAIL) lie on the Cytoplasmic side of the membrane. Positions 303–336 (TSLRGSTSHSPRDTPVFINSGSSRSSNSTRPAIL) are disordered. Positions 321–330 (NSGSSRSSNS) are enriched in low complexity.

Belongs to the NIPA (TC 2.A.7) family. As to quaternary structure, homodimer.

The protein localises to the cell membrane. The protein resides in the early endosome. In terms of biological role, acts as a Mg(2+) transporter. Can also transport other divalent cations such as Fe(2+), Sr(2+), Ba(2+), Mn(2+) and Co(2+) but to a much less extent than Mg(2+). The sequence is that of Probable magnesium transporter NIPA2 from Arabidopsis thaliana (Mouse-ear cress).